A 135-amino-acid chain; its full sequence is Hemoglobin subunit beta-2 (135 aa).

Residues 2-135 (HWTAEEKALV…VVDALSKGYH (134 aa)) enclose the Globin domain. Residues His-57 and His-81 each coordinate heme b.

This sequence belongs to the globin family. Hb 2 is a heterotetramer of two alpha and two beta-2 chains. As to expression, red blood cells (at protein level).

Functionally, involved in oxygen transport from gills to the various peripheral tissues. The protein is Hemoglobin subunit beta-2 of Somniosus microcephalus (Greenland sleeper shark).